Reading from the N-terminus, the 241-residue chain is UDP-2,3-diacylglucosamine hydrolase (241 aa).

Residues Asp8, His10, Asp41, Asn79, and His114 each coordinate Mn(2+). 79-80 (NR) lines the substrate pocket. Residues Asp122, Ser160, Asn164, Lys167, and His195 each coordinate substrate. Positions 195 and 197 each coordinate Mn(2+).

The protein belongs to the LpxH family. Mn(2+) is required as a cofactor.

The protein localises to the cell inner membrane. The catalysed reaction is UDP-2-N,3-O-bis[(3R)-3-hydroxytetradecanoyl]-alpha-D-glucosamine + H2O = 2-N,3-O-bis[(3R)-3-hydroxytetradecanoyl]-alpha-D-glucosaminyl 1-phosphate + UMP + 2 H(+). Its pathway is glycolipid biosynthesis; lipid IV(A) biosynthesis; lipid IV(A) from (3R)-3-hydroxytetradecanoyl-[acyl-carrier-protein] and UDP-N-acetyl-alpha-D-glucosamine: step 4/6. Functionally, hydrolyzes the pyrophosphate bond of UDP-2,3-diacylglucosamine to yield 2,3-diacylglucosamine 1-phosphate (lipid X) and UMP by catalyzing the attack of water at the alpha-P atom. Involved in the biosynthesis of lipid A, a phosphorylated glycolipid that anchors the lipopolysaccharide to the outer membrane of the cell. In Aeromonas hydrophila subsp. hydrophila (strain ATCC 7966 / DSM 30187 / BCRC 13018 / CCUG 14551 / JCM 1027 / KCTC 2358 / NCIMB 9240 / NCTC 8049), this protein is UDP-2,3-diacylglucosamine hydrolase.